The chain runs to 283 residues: Short-chain dehydrogenase cctT (283 aa).

The N-terminal stretch at 1 to 20 is a signal peptide; sequence MLKTVLITGCSHGGLGAAMA. NADP(+) contacts are provided by isoleucine 7, threonine 33, lysine 39, glutamate 55, and asparagine 83. N-linked (GlcNAc...) asparagine glycosylation is present at asparagine 131. The active-site Proton donor is the serine 133. NADP(+)-binding residues include tyrosine 147, arginine 151, valine 180, and threonine 182. The Proton acceptor role is filled by tyrosine 147.

It belongs to the short-chain dehydrogenases/reductases (SDR) family.

Functionally, short-chain dehydrogenase; part of the gene cluster that mediates the biosynthesis of the mycotoxin cyclochlorotine, a hepatotoxic and carcinogenic cyclic chlorinated pentapeptide. The function of cctT within the pathway, if any, remains undetermined. The NRPS cctN initially catalyzes the condensation of L-serine (Ser), Pro, L-2-aminobutyrate (2Abu), Ser, and beta-Phe in this order to produce isocyclotine. After the dichlorination of Pro2 catalyzed by cctP2 to produce isocyclochlorotine, the cctO-mediated transacylation of isocyclochlorotine can furnish cyclochlorotine. The subsequent hydroxylation of cyclochlorotine by cctR yields hydroxycyclochlorotine as the final product. CctP1 probably acts as a phenylalanine aminomutase and provides the uncommon building block beta-Phe. Furthermore, 2Abu can be synthesized from threonine by one of the threonine dehydratases and transaminases localized outside of the cluster. The functions of the remaining proteins encoded by the cluster, cctM and cctT, have not been identified yet. The polypeptide is Short-chain dehydrogenase cctT (Talaromyces islandicus (Penicillium islandicum)).